An 870-amino-acid chain; its full sequence is Valine--tRNA ligase (870 aa).

Polar residues predominate over residues 1–13; that stretch reads MTSQTFTTSSATP. Positions 1-21 are disordered; sequence MTSQTFTTSSATPPTRGVVPD. The 'HIGH' region motif lies at 63–73; that stretch reads PTVSGHLHPGH. The disordered stretch occupies residues 479–505; sequence YDHPLLPDESALPVDPASQPPSGYQES. A 'KMSKS' region motif is present at residues 595–599; that stretch reads KMSKS. An ATP-binding site is contributed by Lys-598.

This sequence belongs to the class-I aminoacyl-tRNA synthetase family. ValS type 2 subfamily. As to quaternary structure, monomer.

It is found in the cytoplasm. It carries out the reaction tRNA(Val) + L-valine + ATP = L-valyl-tRNA(Val) + AMP + diphosphate. Catalyzes the attachment of valine to tRNA(Val). As ValRS can inadvertently accommodate and process structurally similar amino acids such as threonine, to avoid such errors, it has a 'posttransfer' editing activity that hydrolyzes mischarged Thr-tRNA(Val) in a tRNA-dependent manner. The chain is Valine--tRNA ligase from Cutibacterium acnes (strain DSM 16379 / KPA171202) (Propionibacterium acnes).